The chain runs to 969 residues: MMDFLKRFFGSSQERILKRFQKLVEEVNACDEKFSSLSDDELRKKTPQLKQRYQDGESLDKLLPEAYGVVKNVCRRLAGTPVEVSGYHQQWDMVPYDVQILGAIAMHKGFITEMQTGEGKTLTAVMPLYLNALTGKPVHLVTVNDYLAQRDCEWVGSVLRWLGLTTGVLVSGSPPEKRKAIYQCDVVYGTASEFGFDYLRDNSIATRKEEQVGRGFYFAIIDEIDSVLIDEARTPLIISGPGEKHNPVYFELKDRVAELVYFQREMCNHIAIEARKVLDPFLGTDVLPKDKKVVEAISEACRALWLVSKGMPLNRVLRRVREHPDLRAMIDKWDVFYHAEQNKEQCLEKLSSLYIVVDEHNNDFELTDKGMLQWIEKIGGAAEDFVMMDMGHEYALIEEDATLSPADKLNRKIAVSEKDTQRKARAHGLRQLLRAHLLMEKDIDYIVRDDQIVIIDEHTGRPQSGRRFSEGLHQAIEAKEHVTIRKESQTFATVTLQNFFRLYEKLAGMTGTAITESREFKEIYSLYVLQVPTFKPCLRIDHNDAFYMTEREKYQAIVAEIISAHRSGKPILIGTESVEVSEKLSRILRQNRINHTVLNAKNHAQEAEIIAGAGKVGAVTVATNMAGRGTDIKLDEEAVAAGGLYVIGTSRHQSRRIDRQLRGRCARLGDPGAAKFFLSFEDRLMRLFASPKLNTLIRHFRPPEGEAMSDPMFDRLIETAQKRVEGRNYTIRKHTLEYDDVMNKQRQTIYAFRNDVLHAEDLFVVAKEQIEHVALALAFLILKDAHADHCSLPKIEEWLSYSFPVKLDDQEIRRLGDVDAVADYIGDLLIEAFDVKFSAMLAEFTEIIGSAANAQGICNDILRSVIISHIDEEWKVHLVDMDLLRSEVGLRSVGQKDPLIEFKNESFLLFEGLIRDIRIAIVKHLFALELSLTRSDRPDNAIPTVATAFHNHDNFRPMELTIVGEEEES.

ATP-binding positions include Q99, 117–121, and D631; that span reads GEGKT.

Belongs to the SecA family. Monomer and homodimer. Part of the essential Sec protein translocation apparatus which comprises SecA, SecYEG and auxiliary proteins SecDF. Other proteins may also be involved.

The protein localises to the cell inner membrane. The protein resides in the cytoplasm. It carries out the reaction ATP + H2O + cellular proteinSide 1 = ADP + phosphate + cellular proteinSide 2.. Functionally, part of the Sec protein translocase complex. Interacts with the SecYEG preprotein conducting channel. Has a central role in coupling the hydrolysis of ATP to the transfer of proteins into and across the cell membrane, serving as an ATP-driven molecular motor driving the stepwise translocation of polypeptide chains across the membrane. The polypeptide is Protein translocase subunit SecA (Chlamydia trachomatis serovar D (strain ATCC VR-885 / DSM 19411 / UW-3/Cx)).